Consider the following 198-residue polypeptide: Armadillo repeat-containing protein 7 (198 aa).

ARM repeat units lie at residues glutamine 57–glycine 99 and valine 100–proline 140. Serine 169 is modified (phosphoserine).

Component of the minor spliceosome. Within this complex, interacts with RBM48.

Functionally, as a component of the minor spliceosome, involved in the splicing of U12-type introns in pre-mRNAs. This Homo sapiens (Human) protein is Armadillo repeat-containing protein 7 (ARMC7).